A 147-amino-acid chain; its full sequence is Putative acetyltransferase BSU40680 (147 aa).

One can recognise an N-acetyltransferase domain in the interval 1–144; the sequence is MNVKKITSEQ…PHVLMTKQDD (144 aa). CoA contacts are provided by residues 74-76 and 115-117; these read ICI and GFY.

Belongs to the UPF0039 (ElaA) family.

In terms of biological role, could catalyze the transfer of an acetyl group from acetyl coenzyme A (AcCoA) to an acceptor substrate and release both CoA and the acetylated product. The polypeptide is Putative acetyltransferase BSU40680 (yybD) (Bacillus subtilis (strain 168)).